We begin with the raw amino-acid sequence, 415 residues long: Small RNA 2'-O-methyltransferase (415 aa).

2 residues coordinate S-adenosyl-L-methionine: Ser99 and Asp117. Glu169, Glu172, and His173 together coordinate Mg(2+).

Belongs to the methyltransferase superfamily. HEN1 family. The cofactor is Mg(2+).

It localises to the cytoplasm. It carries out the reaction small RNA 3'-end nucleotide + S-adenosyl-L-methionine = small RNA 3'-end 2'-O-methylnucleotide + S-adenosyl-L-homocysteine + H(+). Functionally, methyltransferase that adds a 2'-O-methyl group at the 3'-end of piRNAs, a class of 24 to 30 nucleotide RNAs that are generated by a Dicer-independent mechanism and are primarily derived from transposons and other repeated sequence elements. This probably protects the 3'-end of piRNAs from uridylation activity and subsequent degradation. Stabilization of piRNAs is essential for gametogenesis. This is Small RNA 2'-O-methyltransferase from Bombyx mori (Silk moth).